A 73-amino-acid chain; its full sequence is Large ribosomal subunit protein bL27c (73 aa).

The protein belongs to the bacterial ribosomal protein bL27 family.

It localises to the plastid. The protein resides in the chloroplast. The chain is Large ribosomal subunit protein bL27c (rpl27) from Haptolina hirta (Plankton alga).